The following is a 303-amino-acid chain: Polyisoprenyl-teichoic acid--peptidoglycan teichoic acid transferase TagU (303 aa).

The Cytoplasmic portion of the chain corresponds to 1–4; the sequence is MKKK. Residues 5–25 form a helical; Signal-anchor for type II membrane protein membrane-spanning segment; sequence ILFWVLGILGVLIIGGGIYAY. Residues 26–303 lie on the Extracellular side of the membrane; it reads NVYSSVSNTL…KLRTHLEVTK (278 aa).

It belongs to the LytR/CpsA/Psr (LCP) family.

It localises to the cell membrane. Its pathway is cell wall biogenesis. Its function is as follows. May catalyze the final step in cell wall teichoic acid biosynthesis, the transfer of the anionic cell wall polymers (APs) from their lipid-linked precursor to the cell wall peptidoglycan (PG). This is Polyisoprenyl-teichoic acid--peptidoglycan teichoic acid transferase TagU from Bacillus anthracis (strain A0248).